A 194-amino-acid polypeptide reads, in one-letter code: MGRLLPKSFYYRQPDVVARELLGKILVSCASGACMRCMVTEAEAYFGECDPASRARRGRGRIWRALYGEPGRALVYGMHRQWLLNIVAHSEGMAGAVLLRSCQPLEPPRLDPPPIGPGRLARALSIDRGVDGAPVYERGSPLTLWENPEAVEGFRVACSGRVGVSEDLELPLRFYIAGNPFVSKARVSPAPKHC.

Belongs to the DNA glycosylase MPG family.

This Aeropyrum pernix (strain ATCC 700893 / DSM 11879 / JCM 9820 / NBRC 100138 / K1) protein is Putative 3-methyladenine DNA glycosylase.